Reading from the N-terminus, the 707-residue chain is Casein kinase 1-like protein HD16 (707 aa).

Residues 19–67 are disordered; it reads YDVQDADPAASPVSPAPRGRTGRRGGAAAGRGNKTVAEGGGRKALKPRG. The span at 24-37 shows a compositional bias: low complexity; that stretch reads ADPAASPVSPAPRG. The region spanning 147 to 425 is the Protein kinase domain; sequence YITDRKLGKG…KLISLFDGLI (279 aa). ATP-binding positions include 153 to 161 and K184; that span reads LGKGGFGQV. The active-site Proton acceptor is D276.

This sequence belongs to the protein kinase superfamily. CK1 Ser/Thr protein kinase family. Casein kinase I subfamily. As to quaternary structure, monomer. Interacts with GHD7 (via C-terminus). Interacts with SLR1. In terms of processing, autophosphorylated. Expressed in roots, leaves and stems. Expressed in leaf vascular bundles, and proximal regions of the shoot and roots.

The protein resides in the cytoplasm. It is found in the nucleus. It carries out the reaction L-seryl-[protein] + ATP = O-phospho-L-seryl-[protein] + ADP + H(+). It catalyses the reaction L-threonyl-[protein] + ATP = O-phospho-L-threonyl-[protein] + ADP + H(+). Its function is as follows. Casein kinases are operationally defined by their preferential utilization of acidic proteins such as caseins as substrates. It can phosphorylate a large number of proteins. Can phosphorylate casein on threonine residues in vitro. Involved in the regulation of flowering time through gibberellin (GA) signaling, and independently of photoperiod. Phosphorylates the DELLA protein SLR1, stabilizing SLR1 protein and sustaining SLR1 activity as repressor of GA signaling. Required for normal development of male floral organs and grains, through modulation of GA signaling. Targeted and repressed by the homeobox protein HAZ1 during GA signaling. Can phosphorylate phosvitin and SLR1 in vitro. Is not required for clock function in either the presence or the absence of light signals. Involved in a genetic control pathway for photoperiodic flowering under long day (LD) conditions that includes HD1, GHD7, HD5 and HD2. Phosphorylates and activates GHD7, a major floral repressor under LD conditions. Phosphorylation of GHD7 enhances its function in the repression of EHD1, HD3A and HD3B/RFT1, and obviously delaying flowering. The sequence is that of Casein kinase 1-like protein HD16 from Oryza sativa subsp. japonica (Rice).